A 149-amino-acid chain; its full sequence is Large ribosomal subunit protein eL24B (149 aa).

S50 bears the Phosphoserine mark. Residues 96–149 form a disordered region; that stretch reads QRPEVRAAARAAALKQRKDKRAASESEKKAIKAKSAASSARGQAIKNAKVAARR. Basic and acidic residues predominate over residues 116–125; sequence RAASESEKKA.

This sequence belongs to the eukaryotic ribosomal protein eL24 family. In terms of assembly, component of the large ribosomal subunit (LSU). Mature yeast ribosomes consist of a small (40S) and a large (60S) subunit. The 40S small subunit contains 1 molecule of ribosomal RNA (18S rRNA) and at least 33 different proteins. The large 60S subunit contains 3 rRNA molecules (25S, 5.8S and 5S rRNA) and at least 46 different proteins.

The protein resides in the cytoplasm. Component of the ribosome, a large ribonucleoprotein complex responsible for the synthesis of proteins in the cell. The small ribosomal subunit (SSU) binds messenger RNAs (mRNAs) and translates the encoded message by selecting cognate aminoacyl-transfer RNA (tRNA) molecules. The large subunit (LSU) contains the ribosomal catalytic site termed the peptidyl transferase center (PTC), which catalyzes the formation of peptide bonds, thereby polymerizing the amino acids delivered by tRNAs into a polypeptide chain. The nascent polypeptides leave the ribosome through a tunnel in the LSU and interact with protein factors that function in enzymatic processing, targeting, and the membrane insertion of nascent chains at the exit of the ribosomal tunnel. This chain is Large ribosomal subunit protein eL24B (rpl2402), found in Schizosaccharomyces pombe (strain 972 / ATCC 24843) (Fission yeast).